The primary structure comprises 182 residues: MPVAALIREEIEIPANVNVEINGNTVAVKSGAKELKRDLLYPGIEISTEDGKVVIECTFPRKAQTAIVGTYRSHIQNMIKGVTDGFEYKLVIRYAHFPMKVSAKGNTVMIDNFLGEKYTRTAKIMDGVTVKVSGEEVIVSGANKEFVGQTAANIEQATKVKGRDTRIFQDGIYIVEKAGKVL.

The protein belongs to the universal ribosomal protein uL6 family. In terms of assembly, part of the 50S ribosomal subunit.

Functionally, this protein binds to the 23S rRNA, and is important in its secondary structure. It is located near the subunit interface in the base of the L7/L12 stalk, and near the tRNA binding site of the peptidyltransferase center. The protein is Large ribosomal subunit protein uL6 of Methanococcus maripaludis (strain C6 / ATCC BAA-1332).